The sequence spans 317 residues: tRNA dimethylallyltransferase (317 aa).

19–26 (GPTASGKS) provides a ligand contact to ATP. Residue 21-26 (TASGKS) participates in substrate binding. Residues 44–47 (DSMQ) form an interaction with substrate tRNA region.

Belongs to the IPP transferase family. In terms of assembly, monomer. Mg(2+) is required as a cofactor.

It catalyses the reaction adenosine(37) in tRNA + dimethylallyl diphosphate = N(6)-dimethylallyladenosine(37) in tRNA + diphosphate. Catalyzes the transfer of a dimethylallyl group onto the adenine at position 37 in tRNAs that read codons beginning with uridine, leading to the formation of N6-(dimethylallyl)adenosine (i(6)A). The chain is tRNA dimethylallyltransferase from Methylorubrum populi (strain ATCC BAA-705 / NCIMB 13946 / BJ001) (Methylobacterium populi).